The primary structure comprises 253 residues: 3-deoxy-manno-octulosonate cytidylyltransferase (253 aa).

This sequence belongs to the KdsB family.

It is found in the cytoplasm. It catalyses the reaction 3-deoxy-alpha-D-manno-oct-2-ulosonate + CTP = CMP-3-deoxy-beta-D-manno-octulosonate + diphosphate. The protein operates within nucleotide-sugar biosynthesis; CMP-3-deoxy-D-manno-octulosonate biosynthesis; CMP-3-deoxy-D-manno-octulosonate from 3-deoxy-D-manno-octulosonate and CTP: step 1/1. It participates in bacterial outer membrane biogenesis; lipopolysaccharide biosynthesis. Activates KDO (a required 8-carbon sugar) for incorporation into bacterial lipopolysaccharide in Gram-negative bacteria. The polypeptide is 3-deoxy-manno-octulosonate cytidylyltransferase (Pseudoalteromonas translucida (strain TAC 125)).